The chain runs to 85 residues: MATKKAGGSTRNGRDSEAKRLGVKRFGGESVLAGSIIVRQRGTKFHAGNNVGMGRDHTLFATADGKVKFEVKGEKSRKYVVIVTE.

Residues 1–20 (MATKKAGGSTRNGRDSEAKR) form a disordered region.

It belongs to the bacterial ribosomal protein bL27 family.

This Haemophilus influenzae (strain ATCC 51907 / DSM 11121 / KW20 / Rd) protein is Large ribosomal subunit protein bL27.